Reading from the N-terminus, the 39-residue chain is Omega-actinopoditoxin-Mb1a (39 aa).

3 disulfides stabilise this stretch: C4–C19, C11–C30, and C18–C38.

In terms of processing, contains 3 disulfide bonds. In terms of tissue distribution, expressed by the venom gland.

The protein localises to the secreted. Its function is as follows. Potent inhibitor of insect, but not mammalian, voltage-gated calcium channels (Cav). The chain is Omega-actinopoditoxin-Mb1a from Missulena bradleyi (Eastern mouse spider).